The sequence spans 487 residues: Aspartyl/glutamyl-tRNA(Asn/Gln) amidotransferase subunit B (487 aa).

This sequence belongs to the GatB/GatE family. GatB subfamily. As to quaternary structure, heterotrimer of A, B and C subunits.

It catalyses the reaction L-glutamyl-tRNA(Gln) + L-glutamine + ATP + H2O = L-glutaminyl-tRNA(Gln) + L-glutamate + ADP + phosphate + H(+). The enzyme catalyses L-aspartyl-tRNA(Asn) + L-glutamine + ATP + H2O = L-asparaginyl-tRNA(Asn) + L-glutamate + ADP + phosphate + 2 H(+). In terms of biological role, allows the formation of correctly charged Asn-tRNA(Asn) or Gln-tRNA(Gln) through the transamidation of misacylated Asp-tRNA(Asn) or Glu-tRNA(Gln) in organisms which lack either or both of asparaginyl-tRNA or glutaminyl-tRNA synthetases. The reaction takes place in the presence of glutamine and ATP through an activated phospho-Asp-tRNA(Asn) or phospho-Glu-tRNA(Gln). This chain is Aspartyl/glutamyl-tRNA(Asn/Gln) amidotransferase subunit B, found in Chlamydia abortus (strain DSM 27085 / S26/3) (Chlamydophila abortus).